The chain runs to 188 residues: MATYYSNDFRAGLKIMMDGEPYAVEASEFVKPGKGQAFARVKLRRLLTGTRVEKTFKSTDSAEGADVVDMNLTYLYNDGEFYHFMNNTTFEQLSADEKAVGENAKWLLDQAECIVTLWNGQPISVTPPNFVELEIIETDPGLKGDTAGTGGKPAKLSTGAVVKVPLFVQTGEVIKVDTRSGEYVSRVK.

Lysine 34 is subject to N6-(3,6-diaminohexanoyl)-5-hydroxylysine.

This sequence belongs to the elongation factor P family. In terms of processing, may be beta-lysylated on the epsilon-amino group of Lys-34 by the combined action of EpmA and EpmB, and then hydroxylated on the C5 position of the same residue by EpmC (if this protein is present). Lysylation is critical for the stimulatory effect of EF-P on peptide-bond formation. The lysylation moiety may extend toward the peptidyltransferase center and stabilize the terminal 3-CCA end of the tRNA. Hydroxylation of the C5 position on Lys-34 may allow additional potential stabilizing hydrogen-bond interactions with the P-tRNA.

It is found in the cytoplasm. Its pathway is protein biosynthesis; polypeptide chain elongation. In terms of biological role, involved in peptide bond synthesis. Alleviates ribosome stalling that occurs when 3 or more consecutive Pro residues or the sequence PPG is present in a protein, possibly by augmenting the peptidyl transferase activity of the ribosome. Modification of Lys-34 is required for alleviation. The sequence is that of Elongation factor P from Enterobacter sp. (strain 638).